The sequence spans 222 residues: N-acetyltransferase 8F1 (222 aa).

Residues 53 to 73 traverse the membrane as a helical segment; it reads LVLVSGSWILAVICIFFLLLL. Residues 69-220 enclose the N-acetyltransferase domain; the sequence is FLLLLLRLLA…CTIQLKYSFP (152 aa).

This sequence belongs to the camello family.

The protein localises to the membrane. May play a role in regulation of gastrulation. This Mus musculus (Mouse) protein is N-acetyltransferase 8F1.